We begin with the raw amino-acid sequence, 404 residues long: Keratin, type I cuticular Ha3-I (404 aa).

Residues 1–56 form a head region; it reads MSYSCGLPNLSCRTSCSSRPCVPPSCHGCTLPGACNIPANVSNCNWFCEGSFNGSE. The region spanning 56–367 is the IF rod domain; the sequence is EKETMQFLND…SLLESEDCKL (312 aa). A coil 1A region spans residues 57–91; it reads KETMQFLNDRLASYLEKVRQLERDNAELENLIRER. A linker 1 region spans residues 92–102; it reads SQQQEPLVCAS. A coil 1B region spans residues 103–203; sequence YQSYFKTIEE…HEQEVNTLRC (101 aa). The linker 12 stretch occupies residues 204-219; sequence QLGGRLNVEVDAAPAV. Positions 220–363 are coil 2; the sequence is DLNQVLNETR…NTYRSLLESE (144 aa). The interval 364 to 404 is tail; it reads DCKLPSNPCAITNACDKSTGPCISNPCGPRARCGPCNTFGY.

The protein belongs to the intermediate filament family.

This chain is Keratin, type I cuticular Ha3-I, found in Pan troglodytes (Chimpanzee).